A 363-amino-acid chain; its full sequence is uncharacterized protein (363 aa).

4 helical membrane passes run 34–54 (YVYD…IILW), 60–80 (LALF…TLLV), 91–111 (EIAD…TAAG), and 112–132 (LMFS…PLFL). The segment covering 232 to 245 (SSTTTHSTDSEQIL) has biased composition (polar residues). The disordered stretch occupies residues 232-363 (SSTTTHSTDS…SSQKKKPSRK (132 aa)). Low complexity-rich tracts occupy residues 246–268 (TSVS…TPPN) and 275–285 (DSNSSDSSSSS). A compositionally biased stretch (basic and acidic residues) spans 322-342 (SRSERNAQHHRNKDQEQRQDS).

It belongs to the chlamydial CPn_0443/CT_005/TC_0273 family.

The protein resides in the cell membrane. This is an uncharacterized protein from Chlamydia trachomatis serovar D (strain ATCC VR-885 / DSM 19411 / UW-3/Cx).